The following is a 216-amino-acid chain: MQAFTQHEGLVALLDRENVDTDLIIPKQFLKSIKRAGFGPNLFDELRYLDHGEPGMDNSKRPLNSDFVLNQPRYQGASVLLARKNFGCGSSREHAPWALTQYGFRAIIAPSYADIFFNNSFKNGLLPIVLGELEVARLFDEVKAFPGFKLNIDLERQVVIAPDGRELGFDIEPFRKYCLLNGLDDIGLTLRQADKIRAFEAERLARHPWLESRPVA.

This sequence belongs to the LeuD family. LeuD type 1 subfamily. As to quaternary structure, heterodimer of LeuC and LeuD.

It carries out the reaction (2R,3S)-3-isopropylmalate = (2S)-2-isopropylmalate. Its pathway is amino-acid biosynthesis; L-leucine biosynthesis; L-leucine from 3-methyl-2-oxobutanoate: step 2/4. Its function is as follows. Catalyzes the isomerization between 2-isopropylmalate and 3-isopropylmalate, via the formation of 2-isopropylmaleate. This chain is 3-isopropylmalate dehydratase small subunit 2, found in Bordetella pertussis (strain Tohama I / ATCC BAA-589 / NCTC 13251).